The following is a 178-amino-acid chain: Interleukin-10 (178 aa).

Residues 1-18 (MHSSALLCCLVLLTGVRA) form the signal peptide. Cystine bridges form between Cys-30–Cys-126 and Cys-80–Cys-132. N-linked (GlcNAc...) asparagine glycosylation occurs at Asn-134.

This sequence belongs to the IL-10 family. As to quaternary structure, homodimer. Interacts with IL10RA and IL10RB.

Its subcellular location is the secreted. Major immune regulatory cytokine that acts on many cells of the immune system where it has profound anti-inflammatory functions, limiting excessive tissue disruption caused by inflammation. Mechanistically, IL10 binds to its heterotetrameric receptor comprising IL10RA and IL10RB leading to JAK1 and STAT2-mediated phosphorylation of STAT3. In turn, STAT3 translocates to the nucleus where it drives expression of anti-inflammatory mediators. Targets antigen-presenting cells (APCs) such as macrophages and monocytes and inhibits their release of pro-inflammatory cytokines including granulocyte-macrophage colony-stimulating factor /GM-CSF, granulocyte colony-stimulating factor/G-CSF, IL-1 alpha, IL-1 beta, IL-6, IL-8 and TNF-alpha. Also interferes with antigen presentation by reducing the expression of MHC-class II and co-stimulatory molecules, thereby inhibiting their ability to induce T cell activation. In addition, controls the inflammatory response of macrophages by reprogramming essential metabolic pathways including mTOR signaling. This chain is Interleukin-10 (IL10), found in Cercocebus atys (Sooty mangabey).